We begin with the raw amino-acid sequence, 348 residues long: tRNA N6-adenosine threonylcarbamoyltransferase (348 aa).

Positions 111 and 115 each coordinate Fe cation. Substrate is bound by residues 134-138 (LVSGG), aspartate 167, glycine 180, aspartate 184, and asparagine 280. Residue aspartate 308 coordinates Fe cation.

It belongs to the KAE1 / TsaD family. Requires Fe(2+) as cofactor.

It is found in the cytoplasm. It carries out the reaction L-threonylcarbamoyladenylate + adenosine(37) in tRNA = N(6)-L-threonylcarbamoyladenosine(37) in tRNA + AMP + H(+). Its function is as follows. Required for the formation of a threonylcarbamoyl group on adenosine at position 37 (t(6)A37) in tRNAs that read codons beginning with adenine. Is involved in the transfer of the threonylcarbamoyl moiety of threonylcarbamoyl-AMP (TC-AMP) to the N6 group of A37, together with TsaE and TsaB. TsaD likely plays a direct catalytic role in this reaction. The sequence is that of tRNA N6-adenosine threonylcarbamoyltransferase from Rippkaea orientalis (strain PCC 8801 / RF-1) (Cyanothece sp. (strain PCC 8801)).